A 628-amino-acid chain; its full sequence is Basal cell adhesion molecule (628 aa).

Residues 1–31 form the signal peptide; that stretch reads MEPPDAPAQARGAPRLLLLAVLLAAHPDAQA. Ig-like V-type domains are found at residues 32–142 and 147–257; these read EVRL…ARLN and PEAT…PTFH. Residues 32 to 547 are Extracellular-facing; sequence EVRLSVPPLV…GTVSPQTSQA (516 aa). Cystine bridges form between cysteine 53–cysteine 125, cysteine 172–cysteine 237, and cysteine 291–cysteine 337. Ig-like C2-type domains follow at residues 274 to 355, 363 to 441, and 448 to 541; these read PSTP…KTLE, PLEL…QNFT, and PELK…GTVS. The interval 309–312 is interaction with laminin alpha5; that stretch reads EQEE. Residues asparagine 321, asparagine 377, asparagine 383, asparagine 419, and asparagine 439 are each glycosylated (N-linked (GlcNAc...) asparagine). An intrachain disulfide couples cysteine 384 to cysteine 424. A disulfide bridge connects residues cysteine 473 and cysteine 522. A helical transmembrane segment spans residues 548 to 568; sequence GVAVMAVAVSVGLLLLVVAVF. The Cytoplasmic portion of the chain corresponds to 569-628; it reads YCVRRKGGPCCRQRREKGAPPPGEPGLSHSGSEQPEQTGLLMGGASGGARGGSGGFGDEC. Residues 579–628 are disordered; it reads CRQRREKGAPPPGEPGLSHSGSEQPEQTGLLMGGASGGARGGSGGFGDEC. At serine 596 the chain carries Phosphoserine; by GSK3. Serine 598 carries the phosphoserine; by CK2 modification. Serine 600 carries the phosphoserine modification. Residues 609–628 show a composition bias toward gly residues; that stretch reads LMGGASGGARGGSGGFGDEC. Residue serine 621 is modified to Phosphoserine; by PKA or PKB/AKT1.

Homodimer. Interacts with ITGA4:ITGB1. Interacts with spectrins SPTA1 and SPTB1. In terms of processing, epinephrine-stimulated phosphorylation of Ser-621 by PKA enhances adhesion to laminin. Ser-621 can also be phosphorylated by AKT1. Wide tissue distribution (highest in the pancreas and very low in brain). Closely associated with the basal layer of cells in epithelia and the endothelium of blood vessel walls.

The protein localises to the cell membrane. Its function is as follows. Transmembrane glycoprotein that functions as both a receptor and an adhesion molecule playing a crucial role in cell adhesion, motility, migration and invasion. Extracellular domain enables binding to extracellular matrix proteins, such as laminin, integrin and other ligands while its intracellular domain interacts with cytoskeletal proteins like hemoglobin, facilitating cell signal transduction. Serves as a receptor for laminin alpha-5/LAMA5 to promote cell adhesion. Mechanistically, JAK2 induces BCAM phosphorylation and activates its adhesion to laminin by stimulating a Rap1/AKT signaling pathway in the absence of EPOR. The polypeptide is Basal cell adhesion molecule (BCAM) (Homo sapiens (Human)).